Reading from the N-terminus, the 1333-residue chain is snRNA-activating protein complex subunit 4 (1333 aa).

The disordered stretch occupies residues 29–84 (HFEVSESSLSSDSEADSLPDEDLETAGAPILEEEGSSESSNDEEDPKDKALPEDPE). Acidic residues-rich tracts occupy residues 41 to 52 (SEADSLPDEDLE) and 59 to 73 (LEEE…DEED). S68 is subject to Phosphoserine. An SNAPC5-binding region spans residues 84–133 (ETCLQLNMVYQEVIREKLAEVSQLLAQNQEQQEEILFDLSGTKCPKVKDG). Positions 250–288 (EEALLGNRLDSHDWEKISNINFEGARSAEEIRKFWQSSE) constitute a Myb-like 1 domain. Positions 289–343 (HPSISKQEWSTEEVERLKAIAATHGHLEWHLVAEELGTSRSAFQCLQKFQQYNKT) constitute an HTH myb-type 1 domain. A DNA-binding region (H-T-H motif) is located at residues 317–341 (WHLVAEELGTSRSAFQCLQKFQQYN). The 52-residue stretch at 344 to 395 (LKRKEWTEEEDHMLTQLVQEMRVGNHIPYRKIVYFMEGRDSMQLIYRWTKSL) folds into the Myb-like 2 domain. HTH myb-type domains lie at 396–451 (DPSL…HFSL) and 452–503 (KKGR…RKKQ). DNA-binding regions (H-T-H motif) lie at residues 424-447 (WFKI…IRRL) and 476-499 (WARI…KILA). A compositionally biased stretch (basic residues) spans 503-515 (QHLQRKRGQRPRH). Disordered regions lie at residues 503 to 558 (QHLQ…LEKS), 662 to 702 (LMKE…QNKQ), 811 to 842 (NAKN…LGSC), and 1079 to 1117 (LPSP…PEKA). A compositionally biased stretch (low complexity) spans 516 to 546 (SSQWSSSGSSSSSSEDYGSSSGSDGSSGSEN). Composition is skewed to polar residues over residues 672 to 686 (LPSS…NNTA) and 811 to 826 (NAKN…TGEQ). The SNAPC2-binding stretch occupies residues 1131–1247 (AIVTWLKGCQ…NSIPTTLSPD (117 aa)). Residues S1252, S1254, S1301, and S1309 each carry the phosphoserine modification. Residues 1282-1333 (PAAPDPVQSHLVSPGQRAPSPGEVSAPSPLDASDGLDDLNVLRTRRARHSRR) are disordered. The span at 1324–1333 (RTRRARHSRR) shows a compositional bias: basic residues.

Part of the SNAPc composed of 5 subunits: SNAPC1, SNAPC2, SNAPC3, SNAPC4 and SNAPC5. SNAPC4 interacts with SNAPC1, SNAPC2, SNAPC5, BRF2 and TBP.

The protein localises to the nucleus. Its function is as follows. Part of the SNAPc complex required for the transcription of both RNA polymerase II and III small-nuclear RNA genes. Binds to the proximal sequence element (PSE), a non-TATA-box basal promoter element common to these 2 types of genes. Recruits TBP and BRF2 to the U6 snRNA TATA box. The chain is snRNA-activating protein complex subunit 4 from Mus musculus (Mouse).